The primary structure comprises 351 residues: Phosphoribosylformylglycinamidine cyclo-ligase (351 aa).

It belongs to the AIR synthase family.

The protein localises to the cytoplasm. It catalyses the reaction 2-formamido-N(1)-(5-O-phospho-beta-D-ribosyl)acetamidine + ATP = 5-amino-1-(5-phospho-beta-D-ribosyl)imidazole + ADP + phosphate + H(+). It participates in purine metabolism; IMP biosynthesis via de novo pathway; 5-amino-1-(5-phospho-D-ribosyl)imidazole from N(2)-formyl-N(1)-(5-phospho-D-ribosyl)glycinamide: step 2/2. The chain is Phosphoribosylformylglycinamidine cyclo-ligase from Burkholderia lata (strain ATCC 17760 / DSM 23089 / LMG 22485 / NCIMB 9086 / R18194 / 383).